Here is a 149-residue protein sequence, read N- to C-terminus: Oligosaccharyltransferase complex subunit ostc-B (149 aa).

At 1–32 the chain is on the cytoplasmic side; it reads MESLYRIPFTVLECPNLKLKKPSWLHMPSAMT. A helical membrane pass occupies residues 33-53; sequence VYAMVVVSYFLITGGIIYDVI. The Extracellular portion of the chain corresponds to 54–83; the sequence is VEPPSVGSMTDEHGHQRPVAFLAYRVNGQY. A helical membrane pass occupies residues 84–104; sequence IMEGLASSFLFTMGGLGFIIL. Residues 105-117 lie on the Cytoplasmic side of the membrane; sequence DRSNAPNIPKLNR. A helical transmembrane segment spans residues 118-138; the sequence is FLLLFIGFVCVLLSFFMARVF. The Extracellular portion of the chain corresponds to 139-149; sequence MRMKLPGYLMG.

It belongs to the OSTC family. Specific component of the STT3A-containing form of the oligosaccharyltransferase (OST) complex.

The protein localises to the membrane. Its pathway is protein modification; protein glycosylation. In terms of biological role, specific component of the STT3A-containing form of the oligosaccharyl transferase (OST) complex that catalyzes the initial transfer of a defined glycan (Glc(3)Man(9)GlcNAc(2) in eukaryotes) from the lipid carrier dolichol-pyrophosphate to an asparagine residue within an Asn-X-Ser/Thr consensus motif in nascent polypeptide chains, the first step in protein N-glycosylation. N-glycosylation occurs cotranslationally and the complex associates with the Sec61 complex at the channel-forming translocon complex that mediates protein translocation across the endoplasmic reticulum (ER). All subunits are required for a maximal enzyme activity. The protein is Oligosaccharyltransferase complex subunit ostc-B of Xenopus laevis (African clawed frog).